The chain runs to 500 residues: MQDQYILALDQGTTSSRAMLFDRQGNIVSIAQKEFEQIYPQPGWVEHDPQEIWSTQAGVAAEAVTRTGLNGTSIAAIGITNQRETTIVWDRETGQPVYNAIVWQDRRTADFCDSLKKQGLEAKVRAKTGLPIDSYFSATKIRWILDNVPGARDKARQGKLAFGTVDSWLVWNFTKHELHVTDVTNASRTMLFNIHTREWDSELLELLDIPRSMLPDVKASSEIYGHTKTTVFASKIPLAGIAGDQHAALFGQMCTTSGMVKNTYGTGCFLMMNTGDKPIESKNNLVTTIAWQIGDDVQYALEGSIFIAGAVVQWLRDGVGIIKTAAEIEALAASVPHTDGVYLVPAFAGLGAPHWNARARGSVFGVTRGTTSAHLARAALDAIAYQSLDVLAAMEADSGISIGELRVDGGASANDLLMQFQADLLGVDAVRPQITETTALGAAYLAGLAIGYWKNLDEVRSQWQLDRRFAPSMPKEQVEQRMAGWQRAVRAAKAWADDTQ.

T13 contributes to the ADP binding site. Positions 13, 14, and 15 each coordinate ATP. T13 contacts sn-glycerol 3-phosphate. Residue R17 participates in ADP binding. The sn-glycerol 3-phosphate site is built by R83, E84, Y135, and D244. The glycerol site is built by R83, E84, Y135, D244, and Q245. T266 and G309 together coordinate ADP. 4 residues coordinate ATP: T266, G309, Q313, and G410. Residues G410 and N414 each coordinate ADP.

This sequence belongs to the FGGY kinase family.

The enzyme catalyses glycerol + ATP = sn-glycerol 3-phosphate + ADP + H(+). It functions in the pathway polyol metabolism; glycerol degradation via glycerol kinase pathway; sn-glycerol 3-phosphate from glycerol: step 1/1. Its activity is regulated as follows. Inhibited by fructose 1,6-bisphosphate (FBP). Key enzyme in the regulation of glycerol uptake and metabolism. Catalyzes the phosphorylation of glycerol to yield sn-glycerol 3-phosphate. This Burkholderia ambifaria (strain ATCC BAA-244 / DSM 16087 / CCUG 44356 / LMG 19182 / AMMD) (Burkholderia cepacia (strain AMMD)) protein is Glycerol kinase.